Here is a 581-residue protein sequence, read N- to C-terminus: Prolactin receptor (581 aa).

Positions 1–24 (MKENAASRVVFILLLFLSVSLLNG) are cleaved as a signal peptide. Topologically, residues 25 to 237 (QSPPEKPKLV…NDFPVKDTSM (213 aa)) are extracellular. 2 Fibronectin type-III domains span residues 27–127 (PPEK…IVEP) and 129–229 (PPAN…IPND). C36 and C46 are oxidised to a cystine. N59 carries N-linked (GlcNAc...) asparagine glycosylation. C75 and C86 are disulfide-bonded. N-linked (GlcNAc...) asparagine glycosylation occurs at N132. Positions 211 and 212 each coordinate Zn(2+). The short motif at 215-219 (WSEWS) is the WSXWS motif element. The helical transmembrane segment at 238-258 (WIFVAILSAVICLIMVWAVAL) threads the bilayer. Residues 259-581 (KGYSMVTCIL…PAKKAPPALP (323 aa)) are Cytoplasmic-facing. A Box 1 motif motif is present at residues 267 to 275 (ILPPVPGPK). Disordered regions lie at residues 324–384 (QLMP…EKLE) and 458–499 (DQHA…PRPQ). Basic and acidic residues-rich tracts occupy residues 329 to 349 (PSKE…DSDS), 375 to 384 (HTPEGPEKLE), and 469 to 483 (ETGR…RESE).

This sequence belongs to the type I cytokine receptor family. Type 1 subfamily. In terms of assembly, interacts with SMARCA1. Interacts with NEK3 and VAV2 and this interaction is prolactin-dependent. In terms of tissue distribution, expressed in all tissues examined; liver, peripheral blood lymphocytes, endometrium, corpus luteum, intestine, fetal thymus, fetal spleen, fetal liver and fetal brain.

The protein localises to the membrane. Its function is as follows. This is a receptor for the anterior pituitary hormone prolactin. The sequence is that of Prolactin receptor (PRLR) from Bos taurus (Bovine).